Reading from the N-terminus, the 145-residue chain is Transcriptional anti-antiactivator ExsC (145 aa).

Homodimer. Interacts with ExsE. Interacts directly with ExsD to form a heterotetrameric complex.

Its subcellular location is the cytoplasm. With respect to regulation, in the absence of inducing signals, ExsE interacts with and inhibits ExsC activity. In terms of biological role, part of the regulatory cascade that plays a role in the transcriptional regulation of the type III secretion system (T3SS). Interacts with antiactivator ExsD to inhibit its activity leading to ExsA-mediated transcription. This is Transcriptional anti-antiactivator ExsC (exsC) from Pseudomonas aeruginosa (strain ATCC 15692 / DSM 22644 / CIP 104116 / JCM 14847 / LMG 12228 / 1C / PRS 101 / PAO1).